Here is a 202-residue protein sequence, read N- to C-terminus: MYLGRILAVGRNSNGSFVAYRVSSRSFPNRTTSIQEERVAVVPVEGHERDVFRNPYIAYNCIRIVGDTAVVSNGSHTDTIADKVALGMNLRDAIGLSLLAMDYEKDELNTPRIAAAINGSEAFIGIVTADGLMVSRVPEETPVYISTYEQTEPAATEFKAGSPEEAAEFILKGGEFAAFTHPVTAAAAFNDGEGWNLATREM.

This sequence belongs to the archaeal IMP cyclohydrolase family.

The catalysed reaction is IMP + H2O = 5-formamido-1-(5-phospho-D-ribosyl)imidazole-4-carboxamide. It functions in the pathway purine metabolism; IMP biosynthesis via de novo pathway; IMP from 5-formamido-1-(5-phospho-D-ribosyl)imidazole-4-carboxamide: step 1/1. Its function is as follows. Catalyzes the cyclization of 5-formylamidoimidazole-4-carboxamide ribonucleotide to IMP. The sequence is that of IMP cyclohydrolase from Methanothermobacter thermautotrophicus (strain ATCC 29096 / DSM 1053 / JCM 10044 / NBRC 100330 / Delta H) (Methanobacterium thermoautotrophicum).